Consider the following 439-residue polypeptide: Protein dumpy-20 (439 aa).

The disordered stretch occupies residues 93 to 116 (GTLSDPSLHGSNSSSSTSDVGSSV). Over residues 96-116 (SDPSLHGSNSSSSTSDVGSSV) the composition is skewed to low complexity. 2 consecutive BED-type zinc fingers follow at residues 135-184 (PTEN…YQKV) and 349-398 (KTEH…YNDV). Residues C154, C157, H172, H177, C368, C371, H386, and H391 each coordinate Zn(2+).

Its function is as follows. Involved in cuticle function and is essential for normal morphological development. This Caenorhabditis briggsae protein is Protein dumpy-20 (dpy-20).